We begin with the raw amino-acid sequence, 189 residues long: 7-methyl-GTP pyrophosphatase (189 aa).

Asp71 functions as the Proton acceptor in the catalytic mechanism.

It belongs to the Maf family. YceF subfamily. A divalent metal cation serves as cofactor.

Its subcellular location is the cytoplasm. It catalyses the reaction N(7)-methyl-GTP + H2O = N(7)-methyl-GMP + diphosphate + H(+). Nucleoside triphosphate pyrophosphatase that hydrolyzes 7-methyl-GTP (m(7)GTP). May have a dual role in cell division arrest and in preventing the incorporation of modified nucleotides into cellular nucleic acids. This chain is 7-methyl-GTP pyrophosphatase, found in Bdellovibrio bacteriovorus (strain ATCC 15356 / DSM 50701 / NCIMB 9529 / HD100).